A 148-amino-acid chain; its full sequence is SPbeta prophage-derived uncharacterized protein YomK (148 aa).

2 helical membrane passes run 72–92 and 104–124; these read WGIG…LFGV and NALI…RNII.

It is found in the cell membrane. The polypeptide is SPbeta prophage-derived uncharacterized protein YomK (yomK) (Bacillus subtilis (strain 168)).